The chain runs to 204 residues: Lymphotoxin-alpha (204 aa).

An N-terminal signal peptide occupies residues 1 to 33 (MTPPGRLYLRRVCSTPILLLLGLLLALPPEAQG). A THD domain is found at 62–204 (PAAHLVGDPS…SSVFFGAFAL (143 aa)). Residue Asn95 is glycosylated (N-linked (GlcNAc...) asparagine). Cys119 and Cys155 are joined by a disulfide.

It belongs to the tumor necrosis factor family. In terms of assembly, homotrimer, and heterotrimer of either two LTB and one LTA subunits or (less prevalent) two LTA and one LTB subunits. Interacts with TNFRSF14.

It localises to the secreted. The protein localises to the membrane. Cytokine that in its homotrimeric form binds to TNFRSF1A/TNFR1, TNFRSF1B/TNFBR and TNFRSF14/HVEM. In its heterotrimeric form with LTB binds to TNFRSF3/LTBR. Lymphotoxin is produced by lymphocytes and is cytotoxic for a wide range of tumor cells in vitro and in vivo. In Sus scrofa (Pig), this protein is Lymphotoxin-alpha (LTA).